A 307-amino-acid chain; its full sequence is Formate hydrogenlyase subunit 4 (307 aa).

Topologically, residues 1-2 (MS) are periplasmic. The chain crosses the membrane as a helical span at residues 3 to 23 (VLYPLIQALVLFAVAPLLSGI). Over 24-67 (TRVARARLHNRRGPGVLQEYRDIIKLLGRQSVGPDASGWVFRLT) the chain is Cytoplasmic. A helical transmembrane segment spans residues 68–88 (PYVMVGVMLTIATALPVVTVG). Residues 89 to 93 (SPLPQ) lie on the Periplasmic side of the membrane. The chain crosses the membrane as a helical span at residues 94 to 114 (LGDLITLLYLFAIARFFFAIS). Topologically, residues 115-131 (GLDTGSPFTAIGASREA) are cytoplasmic. Residues 132-152 (MLGVLVEPMLLLGLWVAAQVA) form a helical membrane-spanning segment. Residues 153–167 (GSTNISNITDTVYHW) lie on the Periplasmic side of the membrane. The chain crosses the membrane as a helical span at residues 168 to 188 (PLSQSIPLVLALCACAFATFI). The Cytoplasmic portion of the chain corresponds to 189 to 221 (EMGKLPFDLAEAEQELQEGPLSEYSGSGFGVMK). A helical transmembrane segment spans residues 222-242 (WGISLKQLVVLQMFVGVFIPW). Over 243–253 (GQMETFTAGGL) the chain is Periplasmic. A helical transmembrane segment spans residues 254 to 274 (LLALVIAIVKLVVGVLVIALF). Over 275–284 (ENSMARLRLD) the chain is Cytoplasmic. A helical transmembrane segment spans residues 285 to 305 (ITPRITWAGFGFAFLAFVSLL). At 306 to 307 (AA) the chain is on the periplasmic side.

Belongs to the complex I subunit 1 family. As to quaternary structure, FHL comprises of a formate dehydrogenase, unidentified electron carriers and a hydrogenase (isoenzyme 3). In this non-energy conserving pathway molecular hydrogen and carbodioxide from formate are released.

It is found in the cell inner membrane. This chain is Formate hydrogenlyase subunit 4 (hycD), found in Escherichia coli (strain K12).